Here is a 298-residue protein sequence, read N- to C-terminus: Mimecan (298 aa).

Positions 1–20 are cleaved as a signal peptide; sequence MKTLQSTLLLLLLVPLIKPA. A glycan (O-linked (GalNAc...) threonine) is linked at Thr-80. Asn-88 is a glycosylation site (N-linked (GlcNAc...) (keratan sulfate) asparagine). LRR repeat units follow at residues 112 to 131, 132 to 155, 156 to 179, 180 to 199, 200 to 225, 226 to 246, and 247 to 277; these read DAVP…FNKI, KKLT…GNLI, EDIE…ENQL, LKLP…YNKI, KSRG…HNAL, ESVP…FNNI, and ASIT…GNPI. The N-linked (GlcNAc...) (keratan sulfate) asparagine glycan is linked to Asn-214. A disulfide bond links Cys-255 and Cys-288. N-linked (GlcNAc...) (keratan sulfate) asparagine glycosylation occurs at Asn-258.

The protein belongs to the small leucine-rich proteoglycan (SLRP) family. SLRP class III subfamily. In terms of processing, O-glycosylated with a core 1 or possibly core 8 glycan. Contains keratan sulfate. In terms of tissue distribution, bone.

It is found in the secreted. The protein resides in the extracellular space. Its subcellular location is the extracellular matrix. Induces bone formation in conjunction with TGF-beta-1 or TGF-beta-2. The chain is Mimecan (OGN) from Homo sapiens (Human).